Here is a 125-residue protein sequence, read N- to C-terminus: Large ribosomal subunit protein bL12 (125 aa).

The protein belongs to the bacterial ribosomal protein bL12 family. Homodimer. Part of the ribosomal stalk of the 50S ribosomal subunit. Forms a multimeric L10(L12)X complex, where L10 forms an elongated spine to which 2 to 4 L12 dimers bind in a sequential fashion. Binds GTP-bound translation factors.

In terms of biological role, forms part of the ribosomal stalk which helps the ribosome interact with GTP-bound translation factors. Is thus essential for accurate translation. In Rickettsia canadensis (strain McKiel), this protein is Large ribosomal subunit protein bL12.